Reading from the N-terminus, the 783-residue chain is Spindle pole body protein ppc89 (783 aa).

Ser157 is subject to Phosphoserine. Disordered regions lie at residues 180–216 (FDSP…ETPS), 434–458 (KESN…MNEA), 471–504 (ENKS…PTSG), and 528–610 (LSQS…MKGN). 3 stretches are compositionally biased toward polar residues: residues 201–216 (RSKT…ETPS), 437–453 (NVTS…SKPL), and 474–504 (SGAN…PTSG). Residues 536-551 (PVKHRKRRPKSKRRIT) are compositionally biased toward basic residues. Over residues 566–590 (ESDEGSEEISLDSEYSDILSDDGDF) the composition is skewed to acidic residues.

It is found in the cytoplasm. Its subcellular location is the cytoskeleton. The protein resides in the microtubule organizing center. The protein localises to the spindle pole body. Functionally, has a role in meiosis. The chain is Spindle pole body protein ppc89 (ppc89) from Schizosaccharomyces pombe (strain 972 / ATCC 24843) (Fission yeast).